The sequence spans 218 residues: ATP-dependent dethiobiotin synthetase BioD (218 aa).

9 to 15 contributes to the ATP binding site; sequence TNAGKTT. T14 lines the Mg(2+) pocket. Residue K35 is part of the active site. Residue K35 participates in phosphate binding. Residue T39 coordinates substrate. Residues D50, E116, and 116-119 each bind ATP; that span reads EGAG. Mg(2+) contacts are provided by D50 and E116. 116–119 serves as a coordination point for phosphate; it reads EGAG. 151 to 154 lines the substrate pocket; the sequence is GLIN. Residues N175 and 175–177 contribute to the ATP site; that span reads NLK.

The protein belongs to the dethiobiotin synthetase family. As to quaternary structure, homodimer. It depends on Mg(2+) as a cofactor.

It localises to the cytoplasm. The catalysed reaction is (7R,8S)-7,8-diammoniononanoate + CO2 + ATP = (4R,5S)-dethiobiotin + ADP + phosphate + 3 H(+). The protein operates within cofactor biosynthesis; biotin biosynthesis; biotin from 7,8-diaminononanoate: step 1/2. Its function is as follows. Catalyzes a mechanistically unusual reaction, the ATP-dependent insertion of CO2 between the N7 and N8 nitrogen atoms of 7,8-diaminopelargonic acid (DAPA, also called 7,8-diammoniononanoate) to form a ureido ring. The protein is ATP-dependent dethiobiotin synthetase BioD of Helicobacter pylori (strain ATCC 700392 / 26695) (Campylobacter pylori).